A 162-amino-acid polypeptide reads, in one-letter code: Caveolin-2 (162 aa).

The Cytoplasmic portion of the chain corresponds to 1–86; the sequence is MGLETEKADV…FEISKYVMYK (86 aa). Tyr19 bears the Phosphotyrosine; by SRC mark. Phosphoserine occurs at positions 20 and 23. Phosphotyrosine; by SRC is present on Tyr27. Ser36 carries the post-translational modification Phosphoserine. The helical intramembrane region spans 87-107; the sequence is FLTVFLSIPLAFLAGILFATL. The Cytoplasmic segment spans residues 108-162; the sequence is SCLHIWIIMPFVKTCLMVLPSVQTIWKSVTDAIIAPLCTSIGRSFSSVSLQLSHD.

It belongs to the caveolin family. In terms of assembly, monomer or homodimer. Interacts with CAV1; the interaction forms a stable heterooligomeric complex that is required for targeting to lipid rafts and for caveolae formation. Tyrosine phosphorylated forms do not form heterooligomers with the Tyr-19-phosphorylated form existing as a monomer or dimer, and the Tyr-27-form as a monomer only. Interacts (tyrosine phosphorylated form) with the SH2 domain-containing proteins, RASA1, NCK1 and SRC. Interacts (tyrosine phosphorylated form) with INSR, the interaction (Tyr-27-phosphorylated form) is increased on insulin stimulation. Interacts (Tyr-19 phosphorylated form) with MAPK1 (phosphorylated form); the interaction, promoted by insulin, leads to nuclear location and MAPK1 activation. Interacts with STAT3; the interaction is increased on insulin-induced tyrosine phosphorylation leading to STAT activation. In terms of processing, phosphorylated on serine and tyrosine residues. CAV1 promotes phosphorylation on Ser-23 which then targets the complex to the plasma membrane, lipid rafts and caveolae. Phosphorylation on Ser-36 appears to modulate mitosis in endothelial cells. Phosphorylation on both Tyr-19 and Tyr-27 is required for insulin-induced 'Ser-727' phosphorylation of STAT3 and its activation. Phosphorylation on Tyr-19 is required for insulin-induced phosphorylation of MAPK1 and DNA binding of STAT3. Tyrosine phosphorylation is induced by both EGF and insulin (By. similarity).

Its subcellular location is the nucleus. The protein resides in the cytoplasm. The protein localises to the golgi apparatus membrane. It is found in the cell membrane. It localises to the membrane. Its subcellular location is the caveola. Functionally, may act as a scaffolding protein within caveolar membranes. Interacts directly with G-protein alpha subunits and can functionally regulate their activity. Acts as an accessory protein in conjunction with CAV1 in targeting to lipid rafts and driving caveolae formation. The Ser-36 phosphorylated form has a role in modulating mitosis in endothelial cells. Positive regulator of cellular mitogenesis of the MAPK signaling pathway. Required for the insulin-stimulated nuclear translocation and activation of MAPK1 and STAT3, and the subsequent regulation of cell cycle progression. In Saimiri boliviensis boliviensis (Bolivian squirrel monkey), this protein is Caveolin-2 (CAV2).